Consider the following 92-residue polypeptide: Mediator-associated protein 3 (92 aa).

The 58-residue stretch at 13-70 (KDLRRKIKKTVKKILESSNLYKITEIKAREEASLKLDLDLSQDPYKVIVKEEVENFLE) folds into the DEK-C domain.

In terms of assembly, associated with the Mediator complex.

It is found in the nucleus. This Arabidopsis thaliana (Mouse-ear cress) protein is Mediator-associated protein 3.